Consider the following 62-residue polypeptide: Large ribosomal subunit protein eL24 (62 aa).

Zn(2+) contacts are provided by Cys-7, Cys-10, Cys-33, and Cys-37. The segment at 7–37 adopts a C4-type zinc-finger fold; the sequence is CSFCGKDILPGTGLMYVRNDGSLLWFCSSKC.

This sequence belongs to the eukaryotic ribosomal protein eL24 family. As to quaternary structure, part of the 50S ribosomal subunit. Forms a cluster with proteins L3 and L14. It depends on Zn(2+) as a cofactor.

Functionally, binds to the 23S rRNA. In Sulfolobus acidocaldarius (strain ATCC 33909 / DSM 639 / JCM 8929 / NBRC 15157 / NCIMB 11770), this protein is Large ribosomal subunit protein eL24.